The following is a 212-amino-acid chain: Pyridoxine/pyridoxamine 5'-phosphate oxidase (212 aa).

Substrate contacts are provided by residues Arg8–Tyr11 and Lys66. Residues Arg61–Lys66, Phe76–Thr77, Arg82, Lys83, and Gln105 contribute to the FMN site. Tyr123, Arg127, and Ser131 together coordinate substrate. Residues Gln140–Ser141 and Trp185 contribute to the FMN site. Arg191–His193 lines the substrate pocket. Arg195 is a binding site for FMN.

This sequence belongs to the pyridoxamine 5'-phosphate oxidase family. In terms of assembly, homodimer. FMN is required as a cofactor.

It carries out the reaction pyridoxamine 5'-phosphate + O2 + H2O = pyridoxal 5'-phosphate + H2O2 + NH4(+). The catalysed reaction is pyridoxine 5'-phosphate + O2 = pyridoxal 5'-phosphate + H2O2. The protein operates within cofactor metabolism; pyridoxal 5'-phosphate salvage; pyridoxal 5'-phosphate from pyridoxamine 5'-phosphate: step 1/1. Its pathway is cofactor metabolism; pyridoxal 5'-phosphate salvage; pyridoxal 5'-phosphate from pyridoxine 5'-phosphate: step 1/1. Functionally, catalyzes the oxidation of either pyridoxine 5'-phosphate (PNP) or pyridoxamine 5'-phosphate (PMP) into pyridoxal 5'-phosphate (PLP). The polypeptide is Pyridoxine/pyridoxamine 5'-phosphate oxidase (Shewanella pealeana (strain ATCC 700345 / ANG-SQ1)).